The chain runs to 59 residues: Large ribosomal subunit protein bL32 (59 aa).

Residues 1–19 (MAQPKKKTSKSRRNMRRSH) are compositionally biased toward basic residues. A disordered region spans residues 1-20 (MAQPKKKTSKSRRNMRRSHD).

The protein belongs to the bacterial ribosomal protein bL32 family.

This chain is Large ribosomal subunit protein bL32, found in Maridesulfovibrio salexigens (strain ATCC 14822 / DSM 2638 / NCIMB 8403 / VKM B-1763) (Desulfovibrio salexigens).